The sequence spans 336 residues: Anthranilate phosphoribosyltransferase (336 aa).

5-phospho-alpha-D-ribose 1-diphosphate contacts are provided by residues glycine 79, 82–83 (GD), threonine 87, 89–92 (NIST), 107–115 (KHGNRCVSS), and alanine 119. An anthranilate-binding site is contributed by glycine 79. Serine 91 serves as a coordination point for Mg(2+). Asparagine 110 serves as a coordination point for anthranilate. Arginine 165 contacts anthranilate. Mg(2+) contacts are provided by aspartate 224 and glutamate 225.

Belongs to the anthranilate phosphoribosyltransferase family. As to quaternary structure, homodimer. Mg(2+) is required as a cofactor.

It carries out the reaction N-(5-phospho-beta-D-ribosyl)anthranilate + diphosphate = 5-phospho-alpha-D-ribose 1-diphosphate + anthranilate. The protein operates within amino-acid biosynthesis; L-tryptophan biosynthesis; L-tryptophan from chorismate: step 2/5. Functionally, catalyzes the transfer of the phosphoribosyl group of 5-phosphorylribose-1-pyrophosphate (PRPP) to anthranilate to yield N-(5'-phosphoribosyl)-anthranilate (PRA). This is Anthranilate phosphoribosyltransferase from Lachnoclostridium phytofermentans (strain ATCC 700394 / DSM 18823 / ISDg) (Clostridium phytofermentans).